We begin with the raw amino-acid sequence, 394 residues long: Elongation factor Tu (394 aa).

The region spanning 10-204 (KEHANIGTIG…AVDDYIPTPE (195 aa)) is the tr-type G domain. Positions 19 to 26 (GHVDHGKT) are G1. 19–26 (GHVDHGKT) serves as a coordination point for GTP. Mg(2+) is bound at residue T26. The tract at residues 60-64 (GITIN) is G2. Residues 81-84 (DCPG) form a G3 region. GTP-binding positions include 81–85 (DCPGH) and 136–139 (NKVD). A G4 region spans residues 136–139 (NKVD). Positions 174–176 (SAL) are G5.

This sequence belongs to the TRAFAC class translation factor GTPase superfamily. Classic translation factor GTPase family. EF-Tu/EF-1A subfamily. Monomer.

Its subcellular location is the cytoplasm. The enzyme catalyses GTP + H2O = GDP + phosphate + H(+). In terms of biological role, GTP hydrolase that promotes the GTP-dependent binding of aminoacyl-tRNA to the A-site of ribosomes during protein biosynthesis. The polypeptide is Elongation factor Tu (Staphylococcus haemolyticus (strain JCSC1435)).